The following is a 167-amino-acid chain: Signal peptidase complex catalytic subunit SEC11 (167 aa).

The Cytoplasmic segment spans residues 1 to 12 (MNLRLELTRFLK). The helical; Signal-anchor for type II membrane protein transmembrane segment at 13–30 (LCFVLSSAFMFWKGLSIA) threads the bilayer. The Lumenal segment spans residues 31–167 (TNSHSPIVVV…LGISALLSNE (137 aa)). Residues S44, H83, and D109 each act as charge relay system in the active site. The segment at 153 to 164 (ALMGFLGISALL) is C-terminal short (CTS) helix.

The protein belongs to the peptidase S26B family. As to quaternary structure, component of the signal peptidase complex (SPC) composed of a catalytic subunit SEC11 and three accessory subunits SPC1, SPC2 and SPC3. The complex induces a local thinning of the ER membrane which is used to measure the length of the signal peptide (SP) h-region of protein substrates. This ensures the selectivity of the complex towards h-regions shorter than 18-20 amino acids. SPC associates with the translocon complex.

Its subcellular location is the endoplasmic reticulum membrane. It catalyses the reaction Cleavage of hydrophobic, N-terminal signal or leader sequences from secreted and periplasmic proteins.. In terms of biological role, catalytic component of the signal peptidase complex (SPC) which catalyzes the cleavage of N-terminal signal sequences from nascent proteins as they are translocated into the lumen of the endoplasmic reticulum. Specifically cleaves N-terminal signal peptides that contain a hydrophobic alpha-helix (h-region) shorter than 18-20 amino acids. This Zygosaccharomyces rouxii (strain ATCC 2623 / CBS 732 / NBRC 1130 / NCYC 568 / NRRL Y-229) protein is Signal peptidase complex catalytic subunit SEC11 (SEC11).